A 111-amino-acid chain; its full sequence is Pyrimidine/purine nucleoside phosphorylase 1 (111 aa).

Belongs to the nucleoside phosphorylase PpnP family.

It carries out the reaction a purine D-ribonucleoside + phosphate = a purine nucleobase + alpha-D-ribose 1-phosphate. The catalysed reaction is adenosine + phosphate = alpha-D-ribose 1-phosphate + adenine. The enzyme catalyses cytidine + phosphate = cytosine + alpha-D-ribose 1-phosphate. It catalyses the reaction guanosine + phosphate = alpha-D-ribose 1-phosphate + guanine. It carries out the reaction inosine + phosphate = alpha-D-ribose 1-phosphate + hypoxanthine. The catalysed reaction is thymidine + phosphate = 2-deoxy-alpha-D-ribose 1-phosphate + thymine. The enzyme catalyses uridine + phosphate = alpha-D-ribose 1-phosphate + uracil. It catalyses the reaction xanthosine + phosphate = alpha-D-ribose 1-phosphate + xanthine. Its function is as follows. Catalyzes the phosphorolysis of diverse nucleosides, yielding D-ribose 1-phosphate and the respective free bases. Can use uridine, adenosine, guanosine, cytidine, thymidine, inosine and xanthosine as substrates. Also catalyzes the reverse reactions. This Psychrobacter arcticus (strain DSM 17307 / VKM B-2377 / 273-4) protein is Pyrimidine/purine nucleoside phosphorylase 1.